Reading from the N-terminus, the 365-residue chain is Phosphate acyltransferase (365 aa).

Belongs to the PlsX family. Homodimer. Probably interacts with PlsY.

The protein resides in the cytoplasm. The enzyme catalyses a fatty acyl-[ACP] + phosphate = an acyl phosphate + holo-[ACP]. It participates in lipid metabolism; phospholipid metabolism. In terms of biological role, catalyzes the reversible formation of acyl-phosphate (acyl-PO(4)) from acyl-[acyl-carrier-protein] (acyl-ACP). This enzyme utilizes acyl-ACP as fatty acyl donor, but not acyl-CoA. This Klebsiella pneumoniae subsp. pneumoniae (strain ATCC 700721 / MGH 78578) protein is Phosphate acyltransferase.